The primary structure comprises 308 residues: Homoserine kinase (308 aa).

P95–A105 is an ATP binding site.

Belongs to the GHMP kinase family. Homoserine kinase subfamily.

It is found in the cytoplasm. It catalyses the reaction L-homoserine + ATP = O-phospho-L-homoserine + ADP + H(+). It participates in amino-acid biosynthesis; L-threonine biosynthesis; L-threonine from L-aspartate: step 4/5. Its function is as follows. Catalyzes the ATP-dependent phosphorylation of L-homoserine to L-homoserine phosphate. This is Homoserine kinase from Corynebacterium diphtheriae (strain ATCC 700971 / NCTC 13129 / Biotype gravis).